Consider the following 528-residue polypeptide: MLGRSLREVSAALKQGQITPTELCQKCLSLIKKTKFLNAYITVSEEVALKQAEESEKRYKNGQSLGDLDGIPIAVKDNFSTSGIETTCASNMLKGYIPPYNATVVQKLLDQGALLMGKTNLDEFAMGSGSTDGVFGPVKNPWSYSKQYREKRKQNPHSENEDSDWLITGGSSGGSAAAVSAFTCYAALGSDTGGSTRNPAAHCGLVGFKPSYGLVSRHGLIPLVNSMDVPGILTRCVDDAAIVLGALAGPDPRDSTTVHEPINKPFMLPSLADVSKLCIGIPKEYLVPELSSEVQSLWSKAADLFESEGAKVIEVSLPHTSYSIVCYHVLCTSEVASNMARFDGLQYGHRCDIDVSTEAMYAATRREGFNDVVRGRILSGNFFLLKENYENYFVKAQKVRRLIANDFVNAFNSGVDVLLTPTTLSEAVPYLEFIKEDNRTRSAQDDIFTQAVNMAGLPAVSIPVALSNQGLPIGLQFIGRAFCDQQLLTVAKWFEKQVQFPVIQLQELMDDCSAVLENEKLASVSLKQ.

Lysine 76 serves as the catalytic Charge relay system. Residues 148 to 167 are disordered; that stretch reads YREKRKQNPHSENEDSDWLI. Serine 171 serves as the catalytic Charge relay system. Catalysis depends on serine 195, which acts as the Acyl-ester intermediate.

This sequence belongs to the amidase family. GatA subfamily. As to quaternary structure, subunit of the heterotrimeric GatCAB amidotransferase (AdT) complex, composed of A (QRSL1), B (GATB) and C (GATC) subunits.

The protein resides in the mitochondrion. It catalyses the reaction L-glutamyl-tRNA(Gln) + L-glutamine + ATP + H2O = L-glutaminyl-tRNA(Gln) + L-glutamate + ADP + phosphate + H(+). In terms of biological role, allows the formation of correctly charged Gln-tRNA(Gln) through the transamidation of misacylated Glu-tRNA(Gln) in the mitochondria. The reaction takes place in the presence of glutamine and ATP through an activated gamma-phospho-Glu-tRNA(Gln). This Homo sapiens (Human) protein is Glutamyl-tRNA(Gln) amidotransferase subunit A, mitochondrial.